Consider the following 553-residue polypeptide: Undecaprenyl phosphate-alpha-4-amino-4-deoxy-L-arabinose arabinosyl transferase (553 aa).

11 consecutive transmembrane segments (helical) span residues 6–26 (ACKVGAFLMALFFVITYLLPL), 89–109 (FGSVFCIFISAILLYRLAMMM), 115–135 (IAFATSLIYISMFLVFAIGTY), 180–200 (FMTKGFLALAVPVIVMLPIVI), 208–228 (IVCFGPLAIISAIAISLPWVI), 258–278 (IAPFWYYIPILILGVIPWLGL), 293–313 (NPEMFFLLCWFVVPLLFFSIA), 317–337 (LPTYILPCMAPLAMMMAKFGV), 352–372 (GMVNVFLGLLAVIVLFAMEVV), 386–406 (WVLAIVAFGIWGIIGYLCFAL), and 410–430 (YWLLAAFCSIVVSLVIGHALP).

It belongs to the glycosyltransferase 83 family.

The protein localises to the cell inner membrane. The enzyme catalyses 4-amino-4-deoxy-alpha-L-arabinopyranosyl di-trans,octa-cis-undecaprenyl phosphate + lipid IVA = lipid IIA + di-trans,octa-cis-undecaprenyl phosphate.. It functions in the pathway lipopolysaccharide metabolism; 4-amino-4-deoxy-beta-L-arabinose-lipid A biosynthesis. In terms of biological role, catalyzes the transfer of the L-Ara4N moiety of the glycolipid undecaprenyl phosphate-alpha-L-Ara4N to lipid A. The modified arabinose is attached to lipid A and is required for resistance to polymyxin and cationic antimicrobial peptides. This is Undecaprenyl phosphate-alpha-4-amino-4-deoxy-L-arabinose arabinosyl transferase (arnT) from Photorhabdus laumondii subsp. laumondii (strain DSM 15139 / CIP 105565 / TT01) (Photorhabdus luminescens subsp. laumondii).